A 225-amino-acid chain; its full sequence is Ribulose-phosphate 3-epimerase (225 aa).

Residue S10 participates in substrate binding. The a divalent metal cation site is built by H35, D37, and H68. Residue D37 is the Proton acceptor of the active site. Residues H68, 144-147 (GFGG), and 175-177 (DGG) each bind substrate. D175 is a binding site for a divalent metal cation. D175 functions as the Proton donor in the catalytic mechanism.

It belongs to the ribulose-phosphate 3-epimerase family. A divalent metal cation serves as cofactor.

The enzyme catalyses D-ribulose 5-phosphate = D-xylulose 5-phosphate. It participates in carbohydrate degradation. Functionally, catalyzes the reversible epimerization of D-ribulose 5-phosphate to D-xylulose 5-phosphate. The chain is Ribulose-phosphate 3-epimerase from Rhodospirillum rubrum.